Reading from the N-terminus, the 337-residue chain is Protein LEG1 homolog (337 aa).

Residues 1-20 form the signal peptide; sequence MAVLASWVWVLAGCFCAAVA. N-linked (GlcNAc...) asparagine glycosylation occurs at N171.

The protein belongs to the LEG1 family.

The protein resides in the secreted. In terms of biological role, may be involved in early liver development. In Mus musculus (Mouse), this protein is Protein LEG1 homolog.